The chain runs to 182 residues: ATP synthase subunit delta (182 aa).

Belongs to the ATPase delta chain family. In terms of assembly, F-type ATPases have 2 components, F(1) - the catalytic core - and F(0) - the membrane proton channel. F(1) has five subunits: alpha(3), beta(3), gamma(1), delta(1), epsilon(1). F(0) has three main subunits: a(1), b(2) and c(10-14). The alpha and beta chains form an alternating ring which encloses part of the gamma chain. F(1) is attached to F(0) by a central stalk formed by the gamma and epsilon chains, while a peripheral stalk is formed by the delta and b chains.

The protein localises to the cell inner membrane. Functionally, f(1)F(0) ATP synthase produces ATP from ADP in the presence of a proton or sodium gradient. F-type ATPases consist of two structural domains, F(1) containing the extramembraneous catalytic core and F(0) containing the membrane proton channel, linked together by a central stalk and a peripheral stalk. During catalysis, ATP synthesis in the catalytic domain of F(1) is coupled via a rotary mechanism of the central stalk subunits to proton translocation. In terms of biological role, this protein is part of the stalk that links CF(0) to CF(1). It either transmits conformational changes from CF(0) to CF(1) or is implicated in proton conduction. The protein is ATP synthase subunit delta of Sulfurihydrogenibium azorense (strain DSM 15241 / OCM 825 / Az-Fu1).